The following is a 167-amino-acid chain: uncharacterized protein (167 aa).

This is an uncharacterized protein from Pasteurella multocida (strain Pm70).